Reading from the N-terminus, the 1497-residue chain is ABC multidrug transporter C (1497 aa).

The span at 1–13 (MSLLGTINPNINP) shows a compositional bias: polar residues. The disordered stretch occupies residues 1-21 (MSLLGTINPNINPERTVAGRG). Residues N137 and N336 are each glycosylated (N-linked (GlcNAc...) asparagine). In terms of domain architecture, ABC transporter 1 spans 158-412 (LEVGTLVRRI…FTNMGFECPE (255 aa)). The next 5 membrane-spanning stretches (helical) occupy residues 523 to 543 (LTMS…SVFY), 557 to 577 (ALLF…ILTL), 599 to 621 (AIAS…NLTL), 632 to 652 (GAFF…SMLF), and 665 to 685 (ALVP…FTIP). Residue N762 is glycosylated (N-linked (GlcNAc...) asparagine). Residues 777 to 797 (GIMFGFMFFFMFTYLTATEYI) form a helical membrane-spanning segment. The tract at residues 815–843 (QPTGSHDVEKSPEVSSAAKTDEASSKEAT) is disordered. Positions 853–1096 (FQWKDVCYDI…LASYFERNGA (244 aa)) constitute an ABC transporter 2 domain. 889–896 (GVSGAGKT) provides a ligand contact to ATP. 5 consecutive transmembrane segments (helical) span residues 1192–1212 (YIYS…FSFF), 1226–1246 (FSIF…MPNF), 1273–1293 (IIVE…CWYY), 1313–1333 (LMFL…HMMI), and 1352–1372 (LCLI…FWIF). N1411 carries an N-linked (GlcNAc...) asparagine glycan. A helical transmembrane segment spans residues 1464–1484 (FGIMWAYIIFNIFAAVFIYWL).

This sequence belongs to the ABC transporter superfamily. ABCG family. PDR (TC 3.A.1.205) subfamily.

Its subcellular location is the cell membrane. The catalysed reaction is fluconazole(in) + ATP + H2O = fluconazole(out) + ADP + phosphate + H(+). The enzyme catalyses itraconazole(in) + ATP + H2O = itraconazole(out) + ADP + phosphate + H(+). It catalyses the reaction voriconazole(in) + ATP + H2O = voriconazole(out) + ADP + phosphate + H(+). Its activity is regulated as follows. The efflux inhibitor FK506 impairs the transport activity. Functionally, pleiotropic ABC efflux transporter that shows a strong substrate specificity for the azole class of drugs such as lotrimazole (CLT), fluconazole (FLC), itraconazole (ITC), ketoconazole (KTC), posaconazole (POS), tebuconazole (TEBZ), and voriconazole (VRC). Is also able to transport rhodamine 6G (R-6G), a known substrate for many ABC transporters. Required for normal pathogenesis in a Galleria mellonella (greater wax moth) infection model. The polypeptide is ABC multidrug transporter C (Aspergillus fumigatus (strain ATCC MYA-4609 / CBS 101355 / FGSC A1100 / Af293) (Neosartorya fumigata)).